Here is a 64-residue protein sequence, read N- to C-terminus: MPKVKTHSGAKKRFALTAKGKIKRKHAFKNHMLDKKQTKQKRRLTHTALVHKSDKSRIEKLLRI.

It belongs to the bacterial ribosomal protein bL35 family.

The chain is Large ribosomal subunit protein bL35 from Amoebophilus asiaticus (strain 5a2).